A 486-amino-acid polypeptide reads, in one-letter code: Glutamyl-tRNA(Gln) amidotransferase subunit A (486 aa).

Residues lysine 76 and serine 151 each act as charge relay system in the active site. The active-site Acyl-ester intermediate is serine 175.

The protein belongs to the amidase family. GatA subfamily. Heterotrimer of A, B and C subunits.

It carries out the reaction L-glutamyl-tRNA(Gln) + L-glutamine + ATP + H2O = L-glutaminyl-tRNA(Gln) + L-glutamate + ADP + phosphate + H(+). Allows the formation of correctly charged Gln-tRNA(Gln) through the transamidation of misacylated Glu-tRNA(Gln) in organisms which lack glutaminyl-tRNA synthetase. The reaction takes place in the presence of glutamine and ATP through an activated gamma-phospho-Glu-tRNA(Gln). The sequence is that of Glutamyl-tRNA(Gln) amidotransferase subunit A from Marinomonas sp. (strain MWYL1).